Consider the following 407-residue polypeptide: Serine hydroxymethyltransferase (407 aa).

(6S)-5,6,7,8-tetrahydrofolate is bound by residues leucine 117 and 121–123 (GHL). N6-(pyridoxal phosphate)lysine is present on lysine 226. Glutamate 242 is a (6S)-5,6,7,8-tetrahydrofolate binding site.

Belongs to the SHMT family. In terms of assembly, homodimer. Requires pyridoxal 5'-phosphate as cofactor.

It is found in the cytoplasm. It carries out the reaction (6R)-5,10-methylene-5,6,7,8-tetrahydrofolate + glycine + H2O = (6S)-5,6,7,8-tetrahydrofolate + L-serine. The protein operates within one-carbon metabolism; tetrahydrofolate interconversion. Its pathway is amino-acid biosynthesis; glycine biosynthesis; glycine from L-serine: step 1/1. Functionally, catalyzes the reversible interconversion of serine and glycine with tetrahydrofolate (THF) serving as the one-carbon carrier. This reaction serves as the major source of one-carbon groups required for the biosynthesis of purines, thymidylate, methionine, and other important biomolecules. Also exhibits THF-independent aldolase activity toward beta-hydroxyamino acids, producing glycine and aldehydes, via a retro-aldol mechanism. The protein is Serine hydroxymethyltransferase of Thermus thermophilus (strain ATCC BAA-163 / DSM 7039 / HB27).